Consider the following 1093-residue polypeptide: uncharacterized protein (1093 aa).

This is an uncharacterized protein from Escherichia coli (strain K12).